Reading from the N-terminus, the 191-residue chain is Peptidyl-tRNA hydrolase (191 aa).

TRNA is bound at residue Y14. H19 acts as the Proton acceptor in catalysis. Residues Y64, N66, and N112 each contribute to the tRNA site.

Belongs to the PTH family. As to quaternary structure, monomer.

The protein resides in the cytoplasm. The catalysed reaction is an N-acyl-L-alpha-aminoacyl-tRNA + H2O = an N-acyl-L-amino acid + a tRNA + H(+). Its function is as follows. Hydrolyzes ribosome-free peptidyl-tRNAs (with 1 or more amino acids incorporated), which drop off the ribosome during protein synthesis, or as a result of ribosome stalling. In terms of biological role, catalyzes the release of premature peptidyl moieties from peptidyl-tRNA molecules trapped in stalled 50S ribosomal subunits, and thus maintains levels of free tRNAs and 50S ribosomes. The polypeptide is Peptidyl-tRNA hydrolase (Lachnoclostridium phytofermentans (strain ATCC 700394 / DSM 18823 / ISDg) (Clostridium phytofermentans)).